Reading from the N-terminus, the 154-residue chain is tRNA (cytidine(34)-2'-O)-methyltransferase (154 aa).

The S-adenosyl-L-methionine site is built by L78, G100, I122, and S130.

The protein belongs to the class IV-like SAM-binding methyltransferase superfamily. RNA methyltransferase TrmH family. TrmL subfamily. Homodimer.

It is found in the cytoplasm. It carries out the reaction cytidine(34) in tRNA + S-adenosyl-L-methionine = 2'-O-methylcytidine(34) in tRNA + S-adenosyl-L-homocysteine + H(+). The enzyme catalyses 5-carboxymethylaminomethyluridine(34) in tRNA(Leu) + S-adenosyl-L-methionine = 5-carboxymethylaminomethyl-2'-O-methyluridine(34) in tRNA(Leu) + S-adenosyl-L-homocysteine + H(+). Its function is as follows. Methylates the ribose at the nucleotide 34 wobble position in the two leucyl isoacceptors tRNA(Leu)(CmAA) and tRNA(Leu)(cmnm5UmAA). Catalyzes the methyl transfer from S-adenosyl-L-methionine to the 2'-OH of the wobble nucleotide. This is tRNA (cytidine(34)-2'-O)-methyltransferase from Saccharophagus degradans (strain 2-40 / ATCC 43961 / DSM 17024).